Consider the following 466-residue polypeptide: A-type ATP synthase subunit B 2 (466 aa).

Belongs to the ATPase alpha/beta chains family. In terms of assembly, has multiple subunits with at least A(3), B(3), C, D, E, F, H, I and proteolipid K(x).

The protein resides in the cell membrane. Its function is as follows. Component of the A-type ATP synthase that produces ATP from ADP in the presence of a proton gradient across the membrane. The B chain is a regulatory subunit. The chain is A-type ATP synthase subunit B 2 from Methanospirillum hungatei JF-1 (strain ATCC 27890 / DSM 864 / NBRC 100397 / JF-1).